We begin with the raw amino-acid sequence, 202 residues long: Glycerol-3-phosphate acyltransferase (202 aa).

Transmembrane regions (helical) follow at residues 2 to 22 (MIIV…GFVI), 54 to 74 (FLVT…PLWL), 85 to 105 (FFTN…YPVY), 120 to 140 (VVLG…FIVL), 141 to 161 (KIFK…VIGS), and 162 to 182 (LIIQ…ILII).

It belongs to the PlsY family. In terms of assembly, probably interacts with PlsX.

The protein localises to the cell membrane. It carries out the reaction an acyl phosphate + sn-glycerol 3-phosphate = a 1-acyl-sn-glycero-3-phosphate + phosphate. It participates in lipid metabolism; phospholipid metabolism. Functionally, catalyzes the transfer of an acyl group from acyl-phosphate (acyl-PO(4)) to glycerol-3-phosphate (G3P) to form lysophosphatidic acid (LPA). This enzyme utilizes acyl-phosphate as fatty acyl donor, but not acyl-CoA or acyl-ACP. The protein is Glycerol-3-phosphate acyltransferase of Staphylococcus aureus (strain Mu3 / ATCC 700698).